Consider the following 360-residue polypeptide: Type II methyltransferase M.BglII (360 aa).

The segment at 316–341 (TRQRKGSKPSLDSKAHPEEHHKKEIV) is disordered. The segment covering 326–341 (LDSKAHPEEHHKKEIV) has biased composition (basic and acidic residues).

This sequence belongs to the N(4)/N(6)-methyltransferase family. N(4) subfamily.

The enzyme catalyses a 2'-deoxycytidine in DNA + S-adenosyl-L-methionine = an N(4)-methyl-2'-deoxycytidine in DNA + S-adenosyl-L-homocysteine + H(+). In terms of biological role, a beta subtype methylase, recognizes the double-stranded sequence 5'-AGATCT-3', methylates C-5 on both strands, and protects the DNA from cleavage by the BglII endonuclease. The protein is Type II methyltransferase M.BglII of Bacillus subtilis.